A 305-amino-acid chain; its full sequence is NADH-cytochrome b5 reductase 1 (305 aa).

The helical transmembrane segment at 8–28 threads the bilayer; sequence VLLASLGVGLVTLLGLAVGSY. The FAD-binding FR-type domain maps to 44–156; sequence NEKYLLRLLD…RGPSGLLTYT (113 aa). Residues 136–166 and 175–210 each bind FAD; these read DSLKVGDVVEFRGPSGLLTYTGKGHFNIQPN and VAKKLGMIAGGTGITPMLQLIRAILKVPEDPTQCFL.

This sequence belongs to the flavoprotein pyridine nucleotide cytochrome reductase family. Requires FAD as cofactor. As to expression, widely expressed.

The protein localises to the membrane. The enzyme catalyses 2 Fe(III)-[cytochrome b5] + NADH = 2 Fe(II)-[cytochrome b5] + NAD(+) + H(+). Its function is as follows. NADH-cytochrome b5 reductases are involved in desaturation and elongation of fatty acids, cholesterol biosynthesis, drug metabolism, and, in erythrocyte, methemoglobin reduction. The protein is NADH-cytochrome b5 reductase 1 (CYB5R1) of Homo sapiens (Human).